The following is a 334-amino-acid chain: Phosphate acyltransferase (334 aa).

It belongs to the PlsX family. As to quaternary structure, homodimer. Probably interacts with PlsY.

The protein resides in the cytoplasm. The catalysed reaction is a fatty acyl-[ACP] + phosphate = an acyl phosphate + holo-[ACP]. It participates in lipid metabolism; phospholipid metabolism. Catalyzes the reversible formation of acyl-phosphate (acyl-PO(4)) from acyl-[acyl-carrier-protein] (acyl-ACP). This enzyme utilizes acyl-ACP as fatty acyl donor, but not acyl-CoA. This chain is Phosphate acyltransferase, found in Desulfitobacterium hafniense (strain DSM 10664 / DCB-2).